The primary structure comprises 445 residues: uncharacterized protein (445 aa).

8 helical membrane passes run 16-36, 52-72, 98-118, 168-188, 219-239, 243-263, 283-303, and 366-386; these read IVSLGVTASSFLFINGVAFLI, LLASMPSWGLVVTMFAWGYLL, VHSLLWIGVFLFLGGMAAGGC, GLMFPAVVCTLAAVASVLGIV, ASALLMMPQTVTVTFMLVWLI, GWSVAQAGVLVTISQLLGALG, LIAAAAAATLFLLAAVDNEGS, and AAYPTAWALCGVFPLAAVPLV. Residues 417–445 form a disordered region; it reads AWPNGPRRPGPPGQPRRVRQGGTAITPPT.

It belongs to the major facilitator superfamily.

It is found in the cell membrane. This is an uncharacterized protein from Mycobacterium tuberculosis (strain CDC 1551 / Oshkosh).